Reading from the N-terminus, the 60-residue chain is Large ribosomal subunit protein uL30 (60 aa).

The protein belongs to the universal ribosomal protein uL30 family. As to quaternary structure, part of the 50S ribosomal subunit.

The polypeptide is Large ribosomal subunit protein uL30 (Burkholderia mallei (strain NCTC 10247)).